Reading from the N-terminus, the 79-residue chain is Translational regulator CsrA (79 aa).

Belongs to the CsrA/RsmA family. As to quaternary structure, homodimer; the beta-strands of each monomer intercalate to form a hydrophobic core, while the alpha-helices form wings that extend away from the core.

The protein localises to the cytoplasm. A translational regulator that binds mRNA to regulate translation initiation and/or mRNA stability. Usually binds in the 5'-UTR at or near the Shine-Dalgarno sequence preventing ribosome-binding, thus repressing translation. Its main target seems to be the major flagellin gene, while its function is anatagonized by FliW. This chain is Translational regulator CsrA, found in Solidesulfovibrio magneticus (strain ATCC 700980 / DSM 13731 / RS-1) (Desulfovibrio magneticus).